The chain runs to 27 residues: Potassium channel toxin alpha-KTx 9.11 (27 aa).

3 disulfide bridges follow: Cys3/Cys19, Cys6/Cys23, and Cys10/Cys25.

The protein belongs to the short scorpion toxin superfamily. Potassium channel inhibitor family. Alpha-KTx 09 subfamily. As to expression, expressed by the venom gland.

The protein resides in the secreted. May play a role in blocking voltage-gated potassium channels Kv1.2/KCNA2, Kv1.3/KCNA3 and Kv1.6/KCNA6 to a lesser extent. In Mesobuthus gibbosus (Mediterranean checkered scorpion), this protein is Potassium channel toxin alpha-KTx 9.11.